A 386-amino-acid chain; its full sequence is Bifunctional enzyme IspD/IspF (386 aa).

Residues 1–229 are 2-C-methyl-D-erythritol 4-phosphate cytidylyltransferase; sequence MIRGERVIGI…RARALLEAPV (229 aa). Residues 230–386 form a 2-C-methyl-D-erythritol 2,4-cyclodiphosphate synthase region; sequence ATGVGYDTHR…AIALLVRAAG (157 aa). Residues aspartate 236 and histidine 238 each coordinate a divalent metal cation. Residues 236–238 and 261–262 contribute to the 4-CDP-2-C-methyl-D-erythritol 2-phosphate site; these read DTH and HS. Residue histidine 269 coordinates a divalent metal cation. Residues 283 to 285, 288 to 292, 359 to 362, phenylalanine 366, and arginine 369 each bind 4-CDP-2-C-methyl-D-erythritol 2-phosphate; these read DLG, FPDTD, and TTGE.

In the N-terminal section; belongs to the IspD/TarI cytidylyltransferase family. IspD subfamily. This sequence in the C-terminal section; belongs to the IspF family. A divalent metal cation is required as a cofactor.

The enzyme catalyses 2-C-methyl-D-erythritol 4-phosphate + CTP + H(+) = 4-CDP-2-C-methyl-D-erythritol + diphosphate. It carries out the reaction 4-CDP-2-C-methyl-D-erythritol 2-phosphate = 2-C-methyl-D-erythritol 2,4-cyclic diphosphate + CMP. The protein operates within isoprenoid biosynthesis; isopentenyl diphosphate biosynthesis via DXP pathway; isopentenyl diphosphate from 1-deoxy-D-xylulose 5-phosphate: step 2/6. It participates in isoprenoid biosynthesis; isopentenyl diphosphate biosynthesis via DXP pathway; isopentenyl diphosphate from 1-deoxy-D-xylulose 5-phosphate: step 4/6. In terms of biological role, bifunctional enzyme that catalyzes the formation of 4-diphosphocytidyl-2-C-methyl-D-erythritol from CTP and 2-C-methyl-D-erythritol 4-phosphate (MEP) (IspD), and catalyzes the conversion of 4-diphosphocytidyl-2-C-methyl-D-erythritol 2-phosphate (CDP-ME2P) to 2-C-methyl-D-erythritol 2,4-cyclodiphosphate (ME-CPP) with a corresponding release of cytidine 5-monophosphate (CMP) (IspF). This Anaeromyxobacter dehalogenans (strain 2CP-C) protein is Bifunctional enzyme IspD/IspF.